The primary structure comprises 394 residues: Probable fatty acid methyltransferase (394 aa).

S-adenosyl-L-methionine contacts are provided by residues 128-129 (YS), 163-171 (LLDVGCGWG), and 189-194 (TLSKEQ). The active site involves cysteine 358.

It belongs to the CFA/CMAS family.

The chain is Probable fatty acid methyltransferase from Pseudomonas putida (Arthrobacter siderocapsulatus).